Reading from the N-terminus, the 130-residue chain is Small ribosomal subunit protein uS8 (130 aa).

The protein belongs to the universal ribosomal protein uS8 family. Part of the 30S ribosomal subunit. Contacts proteins S5 and S12.

In terms of biological role, one of the primary rRNA binding proteins, it binds directly to 16S rRNA central domain where it helps coordinate assembly of the platform of the 30S subunit. The sequence is that of Small ribosomal subunit protein uS8 from Histophilus somni (strain 129Pt) (Haemophilus somnus).